A 64-amino-acid polypeptide reads, in one-letter code: Large ribosomal subunit protein bL33 (64 aa).

The protein belongs to the bacterial ribosomal protein bL33 family.

The sequence is that of Large ribosomal subunit protein bL33 from Parasynechococcus marenigrum (strain WH8102).